The sequence spans 542 residues: Putative CTP synthase (542 aa).

The segment at Met-1–Leu-277 is amidoligase domain. Ser-23 contacts CTP. UTP is bound at residue Ser-23. Residues Ser-24–Val-29 and Asp-81 contribute to the ATP site. Residues Asp-81 and Glu-151 each contribute to the Mg(2+) site. Residues Asp-158–Glu-160, Lys-198–Gln-203, and Lys-234 contribute to the CTP site. Residues Lys-198–Gln-203 and Lys-234 contribute to the UTP site. One can recognise a Glutamine amidotransferase type-1 domain in the interval Tyr-310–Ser-542. Glu-517 is a catalytic residue.

This sequence belongs to the CTP synthase family. In terms of assembly, homotetramer.

The catalysed reaction is UTP + L-glutamine + ATP + H2O = CTP + L-glutamate + ADP + phosphate + 2 H(+). The enzyme catalyses L-glutamine + H2O = L-glutamate + NH4(+). It carries out the reaction UTP + NH4(+) + ATP = CTP + ADP + phosphate + 2 H(+). The protein operates within pyrimidine metabolism; CTP biosynthesis via de novo pathway; CTP from UDP: step 2/2. Its activity is regulated as follows. Allosterically activated by GTP, when glutamine is the substrate; GTP has no effect on the reaction when ammonia is the substrate. The allosteric effector GTP functions by stabilizing the protein conformation that binds the tetrahedral intermediate(s) formed during glutamine hydrolysis. Inhibited by the product CTP, via allosteric rather than competitive inhibition. In terms of biological role, catalyzes the ATP-dependent amination of UTP to CTP with either L-glutamine or ammonia as the source of nitrogen. Regulates intracellular CTP levels through interactions with the four ribonucleotide triphosphates. This chain is Putative CTP synthase, found in Ureaplasma parvum serovar 3 (strain ATCC 700970).